The primary structure comprises 160 residues: Putative UPF0479 protein YLR466C-A (160 aa).

Helical transmembrane passes span I39 to Q59 and V136 to H156.

It belongs to the UPF0479 family.

Its subcellular location is the membrane. The polypeptide is Putative UPF0479 protein YLR466C-A (Saccharomyces cerevisiae (strain ATCC 204508 / S288c) (Baker's yeast)).